The sequence spans 44 residues: MRDIKTYLSVAPVLTTLWFGSLAGLLIEINRLFPDALTFPFFSF.

The helical transmembrane segment at 7 to 27 threads the bilayer; it reads YLSVAPVLTTLWFGSLAGLLI.

It belongs to the PsaJ family.

The protein localises to the plastid. Its subcellular location is the chloroplast thylakoid membrane. In terms of biological role, may help in the organization of the PsaE and PsaF subunits. In Nymphaea alba (White water-lily), this protein is Photosystem I reaction center subunit IX.